The following is a 313-amino-acid chain: Porphobilinogen deaminase (313 aa).

Cys242 bears the S-(dipyrrolylmethanemethyl)cysteine mark.

The protein belongs to the HMBS family. In terms of assembly, monomer. Dipyrromethane serves as cofactor.

It carries out the reaction 4 porphobilinogen + H2O = hydroxymethylbilane + 4 NH4(+). It functions in the pathway porphyrin-containing compound metabolism; protoporphyrin-IX biosynthesis; coproporphyrinogen-III from 5-aminolevulinate: step 2/4. In terms of biological role, tetrapolymerization of the monopyrrole PBG into the hydroxymethylbilane pre-uroporphyrinogen in several discrete steps. The sequence is that of Porphobilinogen deaminase from Shigella flexneri.